Here is a 270-residue protein sequence, read N- to C-terminus: MSKIAKTAIISPKAEINKGVEIGEFCVIGDGVKLDEGVKLHNNVTLQGHTFVGKNTEIFPFAVLGTQPQDLKYKGEYSELIIGEDNLIREFCMINPGTEGGIKKTLIGDKNLLMAYVHVAHDCVIGSHCILANGVTLAGHIEIGDYVNIGGLTAIHQFVRIAKGCMIAGKSALGKDVPPYCTVEGNRAFIRGLNRHRMRQLLESKDIDFIYALYKRLFRPIPSLRESAKLELEEHANNPFVKEICSFILESSRGVAYKSSEYSSEEKQEE.

Substrate is bound by residues 69–72 (QDLK), histidine 121, histidine 140, and glutamine 157.

Belongs to the transferase hexapeptide repeat family. LpxA subfamily. Homotrimer.

The protein resides in the cytoplasm. It catalyses the reaction a (3R)-hydroxyacyl-[ACP] + UDP-N-acetyl-alpha-D-glucosamine = a UDP-3-O-[(3R)-3-hydroxyacyl]-N-acetyl-alpha-D-glucosamine + holo-[ACP]. The protein operates within glycolipid biosynthesis; lipid IV(A) biosynthesis; lipid IV(A) from (3R)-3-hydroxytetradecanoyl-[acyl-carrier-protein] and UDP-N-acetyl-alpha-D-glucosamine: step 1/6. Its function is as follows. Involved in the biosynthesis of lipid A, a phosphorylated glycolipid that anchors the lipopolysaccharide to the outer membrane of the cell. The polypeptide is Acyl-[acyl-carrier-protein]--UDP-N-acetylglucosamine O-acyltransferase (Helicobacter pylori (strain ATCC 700392 / 26695) (Campylobacter pylori)).